The sequence spans 526 residues: MSGNKVEVDKRRTFAIISHPDAGKTTITEKVLLFGNALQKAGTVKGKKSGQHAKSDWMEMEKDRGISITTSVMQFPYGGALINLLDTPGHEDFSEDTYRTLTAVDSCLMVIDSAKGVEDRTIKLMEVTRLRDTPIVTFMNKCDRDIRDPIELMDEVEDILKIACAPITWPIGSGKEFKGVYHILRDEIILYQSGMGHTIQEERIIKGLHNPELDKVLGSYANEIRDEMELVAGASNEFNQEAFLKGELTPVYFGTALGNFGVDHILDGIVEWAPKPLPRESDVRNVTPDEEKFSGFIFKIQANMDPKHRDRVAFMRVCSGRYEQGMKMHHVRIGKDVNVSDALTFMAGDRSRAEAAYPGDIIGLHNHGTMRIGDTFTQGEKLRFTGVPNFAPEMFRRIRLKDPLKQKQLLKGLVQLSEEGAVQVFRPIDSNDLIVGAVGVLQFEVVVGRLKSEYNVEAIYEGISVSTARWVYCKDERKLEEFRRKCSQNLALDGGNNLTYIAPTMVNLNLSMERYPDVEFAKTREH.

In terms of domain architecture, tr-type G spans 9–277 (DKRRTFAIIS…GIVEWAPKPL (269 aa)). Residues 18-25 (SHPDAGKT), 86-90 (DTPGH), and 140-143 (NKCD) each bind GTP.

It belongs to the TRAFAC class translation factor GTPase superfamily. Classic translation factor GTPase family. PrfC subfamily.

It is found in the cytoplasm. Functionally, increases the formation of ribosomal termination complexes and stimulates activities of RF-1 and RF-2. It binds guanine nucleotides and has strong preference for UGA stop codons. It may interact directly with the ribosome. The stimulation of RF-1 and RF-2 is significantly reduced by GTP and GDP, but not by GMP. This chain is Peptide chain release factor 3, found in Shewanella frigidimarina (strain NCIMB 400).